Consider the following 445-residue polypeptide: Histamine H3 receptor (445 aa).

Over 1–39 (MERAPPDGPLNASGALAGEAAAAGGARGFSAAWTAVLAA) the chain is Extracellular. The N-linked (GlcNAc...) asparagine glycan is linked to Asn-11. Residues 40-60 (LMALLIVATVLGNALVMLAFV) traverse the membrane as a helical segment. The Cytoplasmic portion of the chain corresponds to 61-70 (ADSSLRTQNN). A helical transmembrane segment spans residues 71–91 (FFLLNLAISDFLVGAFCIPLY). The Extracellular segment spans residues 92-108 (VPYVLTGRWTFGRGLCK). A disulfide bridge connects residues Cys-107 and Cys-188. Residues 109 to 129 (LWLVVDYLLCTSSAFNIVLIS) form a helical membrane-spanning segment. At 130 to 156 (YDRFLSVTRAVSYRAQQGDTRRAVRKM) the chain is on the cytoplasmic side. The helical transmembrane segment at 157–177 (LLVWVLAFLLYGPAILSWEYL) threads the bilayer. Residues 178 to 196 (SGGSSIPEGHCYAEFFYNW) are Extracellular-facing. A helical transmembrane segment spans residues 197 to 217 (YFLITASTLEFFTPFLSVTFF). Residues 218-359 (NLSIYLNIQR…LSRDRKVAKS (142 aa)) are Cytoplasmic-facing. Disordered regions lie at residues 237 to 260 (REAA…GCWG) and 288 to 336 (EATL…LEKR). The segment covering 242-257 (PEPPPEAQPSPPPPPG) has biased composition (pro residues). Positions 290–299 (TLGGGGGGGS) are enriched in gly residues. Over residues 300–312 (VASPTSSSGSSSR) the composition is skewed to low complexity. A helical transmembrane segment spans residues 360-380 (LAVIVSIFGLCWAPYTLLMII). Over 381–395 (RAACHGHCVPDYWYE) the chain is Extracellular. The chain crosses the membrane as a helical span at residues 396-416 (TSFWLLWANSAVNPVLYPLCH). At 417 to 445 (HSFRRAFTKLLCPQKLKIQPHSSLEHCWK) the chain is on the cytoplasmic side. Phosphoserine is present on Ser-439.

Belongs to the G-protein coupled receptor 1 family. In terms of tissue distribution, expressed predominantly in the CNS, with the greatest expression in the thalamus and caudate nucleus. The various isoforms are mainly coexpressed in brain, but their relative expression level varies in a region-specific manner. Isoform 3 and isoform 7 are highly expressed in the thalamus, caudate nucleus and cerebellum while isoform 5 and isoform 6 show a poor expression. Isoform 5 and isoform 6 show a high expression in the amygdala, substantia nigra, cerebral cortex and hypothalamus. Isoform 7 is not found in hypothalamus or substantia nigra.

The protein resides in the cell membrane. The H3 subclass of histamine receptors could mediate the histamine signals in CNS and peripheral nervous system. Signals through the inhibition of adenylate cyclase and displays high constitutive activity (spontaneous activity in the absence of agonist). Agonist stimulation of isoform 3 neither modified adenylate cyclase activity nor induced intracellular calcium mobilization. The chain is Histamine H3 receptor (HRH3) from Homo sapiens (Human).